The chain runs to 195 residues: Imidazoleglycerol-phosphate dehydratase (195 aa).

The protein belongs to the imidazoleglycerol-phosphate dehydratase family.

It localises to the cytoplasm. The catalysed reaction is D-erythro-1-(imidazol-4-yl)glycerol 3-phosphate = 3-(imidazol-4-yl)-2-oxopropyl phosphate + H2O. It functions in the pathway amino-acid biosynthesis; L-histidine biosynthesis; L-histidine from 5-phospho-alpha-D-ribose 1-diphosphate: step 6/9. The sequence is that of Imidazoleglycerol-phosphate dehydratase from Burkholderia pseudomallei (strain 1710b).